The chain runs to 231 residues: Thymidylate kinase (231 aa).

Gly-10–Thr-17 lines the ATP pocket.

Belongs to the thymidylate kinase family.

It catalyses the reaction dTMP + ATP = dTDP + ADP. Its function is as follows. Phosphorylation of dTMP to form dTDP in both de novo and salvage pathways of dTTP synthesis. In Acaryochloris marina (strain MBIC 11017), this protein is Thymidylate kinase.